Consider the following 489-residue polypeptide: Glutamate--tRNA ligase (489 aa).

The 'HIGH' region signature appears at 12 to 22 (PSPTGIPHVGM). The 'KMSKS' region signature appears at 256–260 (KLSKR). Lys-259 is an ATP binding site.

It belongs to the class-I aminoacyl-tRNA synthetase family. Glutamate--tRNA ligase type 1 subfamily. Monomer.

It localises to the cytoplasm. The enzyme catalyses tRNA(Glu) + L-glutamate + ATP = L-glutamyl-tRNA(Glu) + AMP + diphosphate. In terms of biological role, catalyzes the attachment of glutamate to tRNA(Glu) in a two-step reaction: glutamate is first activated by ATP to form Glu-AMP and then transferred to the acceptor end of tRNA(Glu). This is Glutamate--tRNA ligase from Mycobacterium marinum (strain ATCC BAA-535 / M).